The following is a 400-amino-acid chain: Acetate kinase (400 aa).

Asn9 lines the Mg(2+) pocket. Lys16 serves as a coordination point for ATP. Arg90 is a substrate binding site. Asp147 acts as the Proton donor/acceptor in catalysis. Residues 207-211 (HIGNG), 282-284 (DLR), and 330-334 (GIGEN) each bind ATP. Glu385 is a binding site for Mg(2+).

It belongs to the acetokinase family. Homodimer. Mg(2+) is required as a cofactor. Mn(2+) serves as cofactor.

The protein resides in the cytoplasm. It carries out the reaction acetate + ATP = acetyl phosphate + ADP. It functions in the pathway metabolic intermediate biosynthesis; acetyl-CoA biosynthesis; acetyl-CoA from acetate: step 1/2. Functionally, catalyzes the formation of acetyl phosphate from acetate and ATP. Can also catalyze the reverse reaction. The polypeptide is Acetate kinase (Staphylococcus aureus (strain Mu3 / ATCC 700698)).